A 417-amino-acid chain; its full sequence is Gamma-glutamyl phosphate reductase (417 aa).

Belongs to the gamma-glutamyl phosphate reductase family.

It is found in the cytoplasm. It catalyses the reaction L-glutamate 5-semialdehyde + phosphate + NADP(+) = L-glutamyl 5-phosphate + NADPH + H(+). The protein operates within amino-acid biosynthesis; L-proline biosynthesis; L-glutamate 5-semialdehyde from L-glutamate: step 2/2. In terms of biological role, catalyzes the NADPH-dependent reduction of L-glutamate 5-phosphate into L-glutamate 5-semialdehyde and phosphate. The product spontaneously undergoes cyclization to form 1-pyrroline-5-carboxylate. In Legionella pneumophila subsp. pneumophila (strain Philadelphia 1 / ATCC 33152 / DSM 7513), this protein is Gamma-glutamyl phosphate reductase.